We begin with the raw amino-acid sequence, 514 residues long: 1,25-dihydroxyvitamin D(3) 24-hydroxylase, mitochondrial (514 aa).

The N-terminal 35 residues, 1–35 (MSCPIDKRRTLIAFLRRLRDLGQPPRSVTSKASAS), are a transit peptide targeting the mitochondrion. Residue C462 participates in heme binding.

The protein belongs to the cytochrome P450 family. Heme is required as a cofactor.

The protein localises to the mitochondrion. The enzyme catalyses calcitriol + 2 reduced [adrenodoxin] + O2 + 2 H(+) = calcitetrol + 2 oxidized [adrenodoxin] + H2O. The catalysed reaction is calcitetrol + 2 reduced [adrenodoxin] + O2 + 2 H(+) = (1S)-1,25-dihydroxy-24-oxocalciol + 2 oxidized [adrenodoxin] + 2 H2O. It carries out the reaction (1S)-1,25-dihydroxy-24-oxocalciol + 2 reduced [adrenodoxin] + O2 + 2 H(+) = (1S)-1,23,25-trihydroxy-24-oxocalciol + 2 oxidized [adrenodoxin] + H2O. It catalyses the reaction (1S)-1,23-dihydroxy-24,25,26,27-tetranorcalciol + 2 reduced [adrenodoxin] + O2 + 2 H(+) = (1S)-1-hydroxy-23-oxo-24,25,26,27-tetranorcalciol + 2 oxidized [adrenodoxin] + 2 H2O. The enzyme catalyses (1S)-1-hydroxy-23-oxo-24,25,26,27-tetranorcalciol + 2 reduced [adrenodoxin] + O2 + H(+) = calcitroate + 2 oxidized [adrenodoxin] + H2O. The catalysed reaction is calcidiol + 2 reduced [adrenodoxin] + O2 + 2 H(+) = secalciferol + 2 oxidized [adrenodoxin] + H2O. It carries out the reaction secalciferol + 2 reduced [adrenodoxin] + O2 + 2 H(+) = 25-hydroxy-24-oxocalciol + 2 oxidized [adrenodoxin] + 2 H2O. It catalyses the reaction 25-hydroxy-24-oxocalciol + 2 reduced [adrenodoxin] + O2 + 2 H(+) = 23S,25-dihydroxy-24-oxocholecalciferol + 2 oxidized [adrenodoxin] + H2O. The enzyme catalyses 20S,23-dihydroxycholecalciferol + 2 reduced [adrenodoxin] + O2 + 2 H(+) = 20S,23,25-trihydroxycholecalciferol + 2 oxidized [adrenodoxin] + H2O. The catalysed reaction is 20S,23-dihydroxycholecalciferol + 2 reduced [adrenodoxin] + O2 + 2 H(+) = 20S,23,24-trihydroxycholecalciferol + 2 oxidized [adrenodoxin] + H2O. It carries out the reaction 20S-hydroxycholecalciferol + 2 reduced [adrenodoxin] + O2 + 2 H(+) = 20S,25-dihydroxycholecalciferol + 2 oxidized [adrenodoxin] + H2O. It catalyses the reaction 20S-hydroxycholecalciferol + 2 reduced [adrenodoxin] + O2 + 2 H(+) = 20S,24S-dihydroxycholecalciferol + 2 oxidized [adrenodoxin] + H2O. The enzyme catalyses 20S-hydroxycholecalciferol + 2 reduced [adrenodoxin] + O2 + 2 H(+) = 20S,24R-dihydroxycholecalciferol + 2 oxidized [adrenodoxin] + H2O. In terms of biological role, a cytochrome P450 monooxygenase with a key role in vitamin D catabolism and calcium homeostasis. Via C24-oxidation pathway, catalyzes the inactivation of both the vitamin D precursor calcidiol (25-hydroxyvitamin D(3)) and the active hormone calcitriol (1-alpha,25-dihydroxyvitamin D(3)). With initial hydroxylation at C-24 (via C24-oxidation pathway), performs a sequential 6-step oxidation of calcitriol leading to the formation of the biliary metabolite calcitroic acid. Hydroxylates at C-24 or C-25 other vitamin D active metabolites, such as CYP11A1-derived secosteroids 20S-hydroxycholecalciferol and 20S,23-dihydroxycholecalciferol. Mechanistically, uses molecular oxygen inserting one oxygen atom into a substrate, and reducing the second into a water molecule, with two electrons provided by NADPH via FDXR/adrenodoxin reductase and FDX1/adrenodoxin. This is 1,25-dihydroxyvitamin D(3) 24-hydroxylase, mitochondrial (Cyp24a1) from Rattus norvegicus (Rat).